The primary structure comprises 197 residues: SERTA domain-containing protein 3 (197 aa).

A disordered region spans residues 1–23 (MGGLKRKHSDLEEEEEEEKWDWS). The SERTA domain maps to 27–74 (LRSYQQALLRISLDKVQRSLGPRAPSLRRHVLIHNTLQQLQAAIRLAP).

As to quaternary structure, interacts with RPA2.

The protein resides in the nucleus. It localises to the nucleolus. Functionally, antiviral interferon-stimulated protein that plays a role in innate immunity and in the suppression of viruses through different mechanisms. Plays a role in the late phase response of TLR-induced immune effector expression. Strong transcriptional coactivator. This is SERTA domain-containing protein 3 (Sertad3) from Mus musculus (Mouse).